The chain runs to 238 residues: Large ribosomal subunit protein uL1 (238 aa).

It belongs to the universal ribosomal protein uL1 family. Part of the 50S ribosomal subunit.

Binds directly to 23S rRNA. The L1 stalk is quite mobile in the ribosome, and is involved in E site tRNA release. In terms of biological role, protein L1 is also a translational repressor protein, it controls the translation of the L11 operon by binding to its mRNA. In Gloeobacter violaceus (strain ATCC 29082 / PCC 7421), this protein is Large ribosomal subunit protein uL1.